A 399-amino-acid chain; its full sequence is Tyrosine--tRNA ligase (399 aa).

The 'HIGH' region signature appears at 42-51; that stretch reads PTAPDLHLGH. Positions 226 to 230 match the 'KMSKS' region motif; it reads KMSKS. Residue K229 participates in ATP binding. The 62-residue stretch at 337–398 folds into the S4 RNA-binding domain; it reads LPVFQVVKQA…GKRKFASVVL (62 aa).

It belongs to the class-I aminoacyl-tRNA synthetase family. TyrS type 2 subfamily. As to quaternary structure, homodimer.

It localises to the cytoplasm. The enzyme catalyses tRNA(Tyr) + L-tyrosine + ATP = L-tyrosyl-tRNA(Tyr) + AMP + diphosphate + H(+). In terms of biological role, catalyzes the attachment of tyrosine to tRNA(Tyr) in a two-step reaction: tyrosine is first activated by ATP to form Tyr-AMP and then transferred to the acceptor end of tRNA(Tyr). In Aromatoleum aromaticum (strain DSM 19018 / LMG 30748 / EbN1) (Azoarcus sp. (strain EbN1)), this protein is Tyrosine--tRNA ligase.